The chain runs to 465 residues: 3-isopropylmalate dehydratase large subunit (465 aa).

Residues cysteine 346, cysteine 406, and cysteine 409 each contribute to the [4Fe-4S] cluster site.

Belongs to the aconitase/IPM isomerase family. LeuC type 1 subfamily. Heterodimer of LeuC and LeuD. [4Fe-4S] cluster serves as cofactor.

The catalysed reaction is (2R,3S)-3-isopropylmalate = (2S)-2-isopropylmalate. It functions in the pathway amino-acid biosynthesis; L-leucine biosynthesis; L-leucine from 3-methyl-2-oxobutanoate: step 2/4. Catalyzes the isomerization between 2-isopropylmalate and 3-isopropylmalate, via the formation of 2-isopropylmaleate. The sequence is that of 3-isopropylmalate dehydratase large subunit from Psychromonas ingrahamii (strain DSM 17664 / CCUG 51855 / 37).